The chain runs to 124 residues: UPF0231 protein Sputcn32_0682 (124 aa).

Belongs to the UPF0231 family.

This Shewanella putrefaciens (strain CN-32 / ATCC BAA-453) protein is UPF0231 protein Sputcn32_0682.